The primary structure comprises 322 residues: uncharacterized protein (322 aa).

The span at 1-17 shows a compositional bias: low complexity; that stretch reads MASMAAAIAASRSAVMS. The tract at residues 1-22 is disordered; sequence MASMAAAIAASRSAVMSGNRPL. Ala2 carries the N-acetylalanine modification. Ser37 carries the phosphoserine modification. The disordered stretch occupies residues 81-104; the sequence is AAAADAGDVRDPARFPGLRGPTGQ. Residue Ser130 is modified to Phosphoserine. 2 stretches are compositionally biased toward polar residues: residues 142-153 and 161-177; these read QEPSAATVTSDA and QGTQ…SSSL. Positions 142 to 301 are disordered; it reads QEPSAATVTS…DDDALFSEPA (160 aa). Ser176 is subject to Phosphoserine. The segment covering 183–203 has biased composition (basic and acidic residues); sequence ARKEEEAPFWKINAERSREGP. Positions 245 to 255 are enriched in polar residues; it reads QEQQTLPSVSA.

The protein resides in the cytoplasm. This is an uncharacterized protein from Mus musculus (Mouse).